Reading from the N-terminus, the 640-residue chain is Threonine--tRNA ligase (640 aa).

The TGS domain occupies 1–61 (MVKITYPDNS…MQDSTIKLIT (61 aa)). Residues 242–533 (DHRKLGPKLN…LIENFAGEFP (292 aa)) are catalytic. 3 residues coordinate Zn(2+): cysteine 334, histidine 385, and histidine 510.

Belongs to the class-II aminoacyl-tRNA synthetase family. Homodimer. Requires Zn(2+) as cofactor.

The protein resides in the cytoplasm. The enzyme catalyses tRNA(Thr) + L-threonine + ATP = L-threonyl-tRNA(Thr) + AMP + diphosphate + H(+). In terms of biological role, catalyzes the attachment of threonine to tRNA(Thr) in a two-step reaction: L-threonine is first activated by ATP to form Thr-AMP and then transferred to the acceptor end of tRNA(Thr). Also edits incorrectly charged L-seryl-tRNA(Thr). The chain is Threonine--tRNA ligase from Petrotoga mobilis (strain DSM 10674 / SJ95).